We begin with the raw amino-acid sequence, 635 residues long: Threonine--tRNA ligase (635 aa).

The TGS domain maps to 1–61 (MINISFPDGS…DNDCKLRILT (61 aa)). Residues 242 to 533 (DHRKLGRELD…LIEEYAGRFP (292 aa)) are catalytic. Residues C333, H384, and H510 each coordinate Zn(2+).

Belongs to the class-II aminoacyl-tRNA synthetase family. In terms of assembly, homodimer. It depends on Zn(2+) as a cofactor.

The protein localises to the cytoplasm. The enzyme catalyses tRNA(Thr) + L-threonine + ATP = L-threonyl-tRNA(Thr) + AMP + diphosphate + H(+). Catalyzes the attachment of threonine to tRNA(Thr) in a two-step reaction: L-threonine is first activated by ATP to form Thr-AMP and then transferred to the acceptor end of tRNA(Thr). Also edits incorrectly charged L-seryl-tRNA(Thr). This Rickettsia africae (strain ESF-5) protein is Threonine--tRNA ligase.